The following is a 101-amino-acid chain: CRISPR-associated endoribonuclease Cas2 (101 aa).

Asp17 serves as a coordination point for Mg(2+).

The protein belongs to the CRISPR-associated endoribonuclease Cas2 protein family. Homodimer, forms a heterotetramer with a Cas1 homodimer. It depends on Mg(2+) as a cofactor.

Functionally, CRISPR (clustered regularly interspaced short palindromic repeat), is an adaptive immune system that provides protection against mobile genetic elements (viruses, transposable elements and conjugative plasmids). CRISPR clusters contain sequences complementary to antecedent mobile elements and target invading nucleic acids. CRISPR clusters are transcribed and processed into CRISPR RNA (crRNA). Functions as a ssRNA-specific endoribonuclease. Involved in the integration of spacer DNA into the CRISPR cassette. This Methanopyrus kandleri (strain AV19 / DSM 6324 / JCM 9639 / NBRC 100938) protein is CRISPR-associated endoribonuclease Cas2.